Here is a 245-residue protein sequence, read N- to C-terminus: Ribonuclease 3 (245 aa).

The RNase III domain maps to 17 to 146 (FTDKMKSLGL…FVGALYLDQG (130 aa)). Glu59 is a Mg(2+) binding site. The active site involves Asp63. The Mg(2+) site is built by Asp132 and Glu135. Glu135 is a catalytic residue. One can recognise a DRBM domain in the interval 172–241 (DFKTQFQEYV…AEQAYKLMKN (70 aa)).

This sequence belongs to the ribonuclease III family. In terms of assembly, homodimer. Mg(2+) is required as a cofactor.

The protein localises to the cytoplasm. It carries out the reaction Endonucleolytic cleavage to 5'-phosphomonoester.. Digests double-stranded RNA. Involved in the processing of primary rRNA transcript to yield the immediate precursors to the large and small rRNAs (23S and 16S). Processes some mRNAs, and tRNAs when they are encoded in the rRNA operon. Processes pre-crRNA and tracrRNA of type II CRISPR loci if present in the organism. The polypeptide is Ribonuclease 3 (Staphylococcus epidermidis (strain ATCC 12228 / FDA PCI 1200)).